The following is a 78-amino-acid chain: Conotoxin TsMSGL-13 (78 aa).

A signal peptide spans 1-24; it reads MSGLGIMVLTLLLFMFMATSHQDA. Residues 25–44 constitute a propeptide that is removed on maturation; sequence GEKQATQRDAINVRRRRSIT. Intrachain disulfides connect cysteine 51-cysteine 63, cysteine 55-cysteine 72, and cysteine 62-cysteine 76. Position 77 is a phenylalanine amide (phenylalanine 77).

The protein belongs to the conotoxin O3 superfamily. Expressed by the venom duct.

The protein resides in the secreted. The chain is Conotoxin TsMSGL-13 from Conus tessulatus (Tessellate cone).